Here is a 237-residue protein sequence, read N- to C-terminus: Mitochondrial inner membrane protease atp23 (237 aa).

His-136 contributes to the a divalent metal cation binding site. Glu-137 is an active-site residue. His-140 contacts a divalent metal cation.

This sequence belongs to the peptidase M76 family.

The protein localises to the mitochondrion inner membrane. In terms of biological role, has a dual role in the assembly of mitochondrial ATPase. Acts as a protease that removes N-terminal residues of mitochondrial ATPase CF(0) subunit 6 at the intermembrane space side. Also involved in the correct assembly of the membrane-embedded ATPase CF(0) particle, probably mediating association of subunit 6 with the subunit 9 ring. This Aspergillus clavatus (strain ATCC 1007 / CBS 513.65 / DSM 816 / NCTC 3887 / NRRL 1 / QM 1276 / 107) protein is Mitochondrial inner membrane protease atp23 (atp23).